The chain runs to 534 residues: Fimbrial subunit type 2 (534 aa).

The signal sequence occupies residues 1-32 (MKYNTSTLGRRAAAAAGVLTLAVLGLAPMAQA). Disordered regions lie at residues 56 to 76 (GDGNPIGAPDGTASNDDGKGA) and 329 to 376 (TYAE…DKDG). The segment covering 334–347 (PPAPETPPANPDNP) has biased composition (pro residues). Positions 361-376 (TIKKVDGNDRSGDKDG) are enriched in basic and acidic residues. Positions 492-496 (LPLTG) match the LPXTG sorting signal motif. Residue threonine 495 is modified to Pentaglycyl murein peptidoglycan amidated threonine. A propeptide spans 496 to 534 (GANGMLILTASGAALLMIAVGSVLVARYRERKRNRDLAA) (removed by sortase).

The protein resides in the secreted. It is found in the cell wall. It localises to the fimbrium. Major fimbrial subunit of A.naeslundii. This is Fimbrial subunit type 2 from Actinomyces naeslundii.